Reading from the N-terminus, the 175-residue chain is Shikimate kinase (175 aa).

17-22 (GAGKST) contributes to the ATP binding site. Ser21 contacts Mg(2+). Positions 39, 63, and 85 each coordinate substrate. Arg123 provides a ligand contact to ATP. Residue Arg142 coordinates substrate. An ATP-binding site is contributed by Gln159.

The protein belongs to the shikimate kinase family. In terms of assembly, monomer. The cofactor is Mg(2+).

Its subcellular location is the cytoplasm. It catalyses the reaction shikimate + ATP = 3-phosphoshikimate + ADP + H(+). It functions in the pathway metabolic intermediate biosynthesis; chorismate biosynthesis; chorismate from D-erythrose 4-phosphate and phosphoenolpyruvate: step 5/7. Catalyzes the specific phosphorylation of the 3-hydroxyl group of shikimic acid using ATP as a cosubstrate. The chain is Shikimate kinase from Photobacterium profundum (strain SS9).